Here is a 391-residue protein sequence, read N- to C-terminus: Pyridinium-3,5-bisthiocarboxylic acid mononucleotide nickel insertion protein (391 aa).

It belongs to the LarC family.

It catalyses the reaction Ni(II)-pyridinium-3,5-bisthiocarboxylate mononucleotide = pyridinium-3,5-bisthiocarboxylate mononucleotide + Ni(2+). In terms of biological role, involved in the biosynthesis of a nickel-pincer cofactor ((SCS)Ni(II) pincer complex). Binds Ni(2+), and functions in nickel delivery to pyridinium-3,5-bisthiocarboxylic acid mononucleotide (P2TMN), to form the mature cofactor. Is thus probably required for the activation of nickel-pincer cofactor-dependent enzymes. The sequence is that of Pyridinium-3,5-bisthiocarboxylic acid mononucleotide nickel insertion protein from Staphylococcus saprophyticus subsp. saprophyticus (strain ATCC 15305 / DSM 20229 / NCIMB 8711 / NCTC 7292 / S-41).